We begin with the raw amino-acid sequence, 236 residues long: tRNA1(Val) (adenine(37)-N6)-methyltransferase (236 aa).

The protein belongs to the methyltransferase superfamily. tRNA (adenine-N(6)-)-methyltransferase family.

It is found in the cytoplasm. It catalyses the reaction adenosine(37) in tRNA1(Val) + S-adenosyl-L-methionine = N(6)-methyladenosine(37) in tRNA1(Val) + S-adenosyl-L-homocysteine + H(+). Functionally, specifically methylates the adenine in position 37 of tRNA(1)(Val) (anticodon cmo5UAC). The protein is tRNA1(Val) (adenine(37)-N6)-methyltransferase of Aeromonas hydrophila subsp. hydrophila (strain ATCC 7966 / DSM 30187 / BCRC 13018 / CCUG 14551 / JCM 1027 / KCTC 2358 / NCIMB 9240 / NCTC 8049).